A 328-amino-acid polypeptide reads, in one-letter code: MAKDIRVLLYYLYTPIENAEQFAADHLAFCKSIGLKGRILVADEGINGTVSGDYETTQKYMDYVHSLPGMEELWFKIDEENEQAFKKMFVRYKKEIVHLGLEDNDFDNDINPLETTGAYLSPKEFKEALLDKDTVVLDTRNDYEYDLGHFRGAIRPDIRNFRELPQWVRDNKEKFMDKRVVVYCTGGVRCEKFSGWMVREGYKDVGQLHGGIATYGKDPEVQGELWDGKMYVFDERIAVDVNHVNPTIVGKDWFDGTPCERYVNCGNPFCNRRILTSEENEDKYLRGCSHECRVHPRNRYVSKNELTQAEVIERLAAIGESLDQAATV.

The region spanning 130–224 (LDKDTVVLDT…YGKDPEVQGE (95 aa)) is the Rhodanese domain. The active-site Cysteine persulfide intermediate is the C184.

Belongs to the TrhO family.

It carries out the reaction uridine(34) in tRNA + AH2 + O2 = 5-hydroxyuridine(34) in tRNA + A + H2O. Functionally, catalyzes oxygen-dependent 5-hydroxyuridine (ho5U) modification at position 34 in tRNAs. The sequence is that of tRNA uridine(34) hydroxylase from Streptococcus pneumoniae (strain ATCC 700669 / Spain 23F-1).